A 251-amino-acid chain; its full sequence is RING-H2 finger protein ATL10 (251 aa).

The helical transmembrane segment at 59–79 (MMLLSILICGIICCLGLHYII) threads the bilayer. An RING-type; atypical zinc finger spans residues 135–177 (CVICLSDFVSGEQLRLLPKCNHGFHVRCIDKWLQQHLTCPKCR).

The protein belongs to the RING-type zinc finger family. ATL subfamily.

It is found in the membrane. It catalyses the reaction S-ubiquitinyl-[E2 ubiquitin-conjugating enzyme]-L-cysteine + [acceptor protein]-L-lysine = [E2 ubiquitin-conjugating enzyme]-L-cysteine + N(6)-ubiquitinyl-[acceptor protein]-L-lysine.. It functions in the pathway protein modification; protein ubiquitination. In Arabidopsis thaliana (Mouse-ear cress), this protein is RING-H2 finger protein ATL10 (ATL10).